Consider the following 371-residue polypeptide: DNA replication and repair protein RecF (371 aa).

30–37 (GANAQGKT) serves as a coordination point for ATP.

It belongs to the RecF family.

Its subcellular location is the cytoplasm. In terms of biological role, the RecF protein is involved in DNA metabolism; it is required for DNA replication and normal SOS inducibility. RecF binds preferentially to single-stranded, linear DNA. It also seems to bind ATP. The sequence is that of DNA replication and repair protein RecF from Lacticaseibacillus paracasei (strain ATCC 334 / BCRC 17002 / CCUG 31169 / CIP 107868 / KCTC 3260 / NRRL B-441) (Lactobacillus paracasei).